We begin with the raw amino-acid sequence, 234 residues long: Endonuclease V (234 aa).

Residues D36 and D104 each contribute to the Mg(2+) site.

The protein belongs to the endonuclease V family. Mg(2+) is required as a cofactor.

The protein resides in the cytoplasm. It catalyses the reaction Endonucleolytic cleavage at apurinic or apyrimidinic sites to products with a 5'-phosphate.. Its function is as follows. DNA repair enzyme involved in the repair of deaminated bases. Selectively cleaves double-stranded DNA at the second phosphodiester bond 3' to a deoxyinosine leaving behind the intact lesion on the nicked DNA. This chain is Endonuclease V, found in Yersinia enterocolitica serotype O:8 / biotype 1B (strain NCTC 13174 / 8081).